Consider the following 595-residue polypeptide: Isoprene synthase, chloroplastic (595 aa).

The transit peptide at 1–37 directs the protein to the chloroplast; it reads MATELLCLHRPISLTHKLFRNPLPKVIQATPLTLKLR. A dimethylallyl diphosphate-binding site is contributed by D345. Residues D345 and D349 each coordinate Mg(2+). Positions 345–349 match the DDXXD motif motif; it reads DDIYD. 3 residues coordinate dimethylallyl diphosphate: E423, R486, and N489. 3 residues coordinate Mg(2+): N489, S493, and E497.

This sequence belongs to the terpene synthase family. Tpsb subfamily. As to quaternary structure, homodimer. Mg(2+) is required as a cofactor. It depends on Mn(2+) as a cofactor.

The protein localises to the plastid. It is found in the chloroplast. It carries out the reaction dimethylallyl diphosphate = isoprene + diphosphate. Its pathway is secondary metabolite biosynthesis; terpenoid biosynthesis. Competitive inhibition is mediated by geranyl diphosphate (GPP). Functionally, lyase that catalyzes the formation of isoprene from dimethylallyl diphosphate via a syn-periplanar elimination mechanism in which the diphosphate-leaving group serves as a general base. The sequence is that of Isoprene synthase, chloroplastic from Populus canescens (Grey poplar).